The primary structure comprises 120 residues: NAD(P)H-quinone oxidoreductase subunit 3 (120 aa).

Helical transmembrane passes span 10–30 (FLGF…TNLI), 64–84 (MFAL…PWAV), and 89–109 (LGLL…IALA).

Belongs to the complex I subunit 3 family. As to quaternary structure, NDH-1 can be composed of about 15 different subunits; different subcomplexes with different compositions have been identified which probably have different functions.

The protein localises to the cellular thylakoid membrane. It carries out the reaction a plastoquinone + NADH + (n+1) H(+)(in) = a plastoquinol + NAD(+) + n H(+)(out). The catalysed reaction is a plastoquinone + NADPH + (n+1) H(+)(in) = a plastoquinol + NADP(+) + n H(+)(out). Functionally, NDH-1 shuttles electrons from an unknown electron donor, via FMN and iron-sulfur (Fe-S) centers, to quinones in the respiratory and/or the photosynthetic chain. The immediate electron acceptor for the enzyme in this species is believed to be plastoquinone. Couples the redox reaction to proton translocation, and thus conserves the redox energy in a proton gradient. Cyanobacterial NDH-1 also plays a role in inorganic carbon-concentration. The protein is NAD(P)H-quinone oxidoreductase subunit 3 of Prochlorococcus marinus (strain MIT 9215).